The chain runs to 482 residues: Probable polyamine transporter At1g31820 (482 aa).

11 consecutive transmembrane segments (helical) span residues 36–56, 66–86, 94–114, 143–163, 171–191, 254–274, 294–314, 344–364, 367–387, 406–426, and 429–449; these read VSML…PFGA, LLAL…EALI, FPIN…FWGF, VPAL…TLLL, LTIV…PFAV, VIFV…AIPL, GWLQ…MFLA, TPLL…GLSF, IIAA…IAFV, TVGS…VIVL, and IKVA…KPCL.

Belongs to the amino acid-polyamine-organocation (APC) superfamily. Polyamine:cation symporter (PHS) (TC 2.A.3.12) family.

It localises to the cell membrane. In terms of biological role, probable cell membrane polyamine/proton symporter involved in the polyamine uptake in cells. In Arabidopsis thaliana (Mouse-ear cress), this protein is Probable polyamine transporter At1g31820.